A 290-amino-acid polypeptide reads, in one-letter code: MSSAVTPSDQGLLPRGPIALEEFVKPFCDRFGLTKLPRHMHVILLSALFYQIINILSPVISRHLSTHYAKLSKKTRLNWDAHVVSSVQSIVLICLGYTCLKEVNAFPDKLFGYSVVAGDIYALTAGYFVWDLYITVRYVHITGIGFVIHAIAALFVITFSYRPYLMYYGPTYLSWELSTPFLNIHYFLDKTNRTGSKFQMINGFILIVTFICVRIAWGWFSAYSTAIEILNHINVAPWALSLFYLAANMSLNCLNLFWVSKMIDAIRRRAHGEKKSTPLQVTSEYAKKNI.

A run of 7 helical transmembrane segments spans residues 40–60, 80–100, 110–130, 139–159, 166–188, 200–220, and 238–260; these read MHVILLSALFYQIINILSPVI, DAHVVSSVQSIVLICLGYTCL, LFGYSVVAGDIYALTAGYFVW, VHITGIGFVIHAIAALFVITF, MYYGPTYLSWELSTPFLNIHYFL, MINGFILIVTFICVRIAWGWF, and WALSLFYLAANMSLNCLNLFWVS. In terms of domain architecture, TLC spans 74–271; it reads KTRLNWDAHV…MIDAIRRRAH (198 aa).

The protein localises to the endoplasmic reticulum membrane. This is an uncharacterized protein from Schizosaccharomyces pombe (strain 972 / ATCC 24843) (Fission yeast).